The chain runs to 1854 residues: Protein virilizer (1854 aa).

Position 186 is a phosphoserine (serine 186). 2 stretches are compositionally biased toward basic and acidic residues: residues 202–214 (YHQH…QREM) and 236–259 (THSE…DWSR). Disordered stretches follow at residues 202–361 (YHQH…EIIG), 777–821 (NPEE…GKPV), 1570–1589 (TSTE…ASSC), 1720–1788 (VRGR…NRGS), and 1804–1854 (IGSP…SYLR). Residues serine 258, serine 260, and serine 276 each carry the phosphoserine modification. A compositionally biased stretch (basic and acidic residues) spans 275-285 (RSRSVVDEHKW). Threonine 288 is modified (phosphothreonine). A Phosphoserine modification is found at serine 295. Threonine 297 is modified (phosphothreonine). Serine 301 and serine 312 each carry phosphoserine. Composition is skewed to basic and acidic residues over residues 325–343 (HSSE…EDRS) and 777–796 (NPEE…KAME). Residues 779–808 (EEKEEKAEKSDAEDKAMEVENEAVEAGGEK) adopt a coiled-coil conformation. Low complexity-rich tracts occupy residues 1738 to 1748 (SRPPNTSRPPS) and 1816 to 1838 (SYRS…PHYS).

Belongs to the vir family. As to quaternary structure, component of the WMM complex, a N6-methyltransferase complex composed of a catalytic subcomplex, named MAC, and of an associated subcomplex, named MACOM. The MAC subcomplex is composed of Ime4/Mettl3 and Mettl14. The MACOM subcomplex is composed of fl(2)d, Flacc/Xio, Hakai, vir, and, in some cases of nito. Part of a complex containing fl(2)d, Sxl and vir.

The protein resides in the nucleus. Functionally, associated component of the WMM complex, a complex that mediates N6-methyladenosine (m6A) methylation of mRNAs, a modification that plays a role in the efficiency of mRNA splicing and is required for sex determination. Required for sex determination and dosage compensation via Sxl alternative splicing: m6A methylation acts as a key regulator of Sxl pre-mRNA and promotes female-specific alternative splicing of Sxl, which determines female physiognomy. M6A methylation is also required for neuronal functions. Required for proper inclusion of regulated exons in Ubx transcripts, leading to isoforms Ia/b and IIa/b. In Drosophila melanogaster (Fruit fly), this protein is Protein virilizer.